A 799-amino-acid chain; its full sequence is Mitochondrial intermediate peptidase (799 aa).

Histidine 562 is a binding site for Zn(2+). Glutamate 563 is a catalytic residue. Residues histidine 566 and histidine 569 each coordinate Zn(2+).

It belongs to the peptidase M3 family. Zn(2+) is required as a cofactor.

It is found in the mitochondrion matrix. The enzyme catalyses Release of an N-terminal octapeptide as second stage of processing of some proteins imported into the mitochondrion.. Its function is as follows. Cleaves proteins, imported into the mitochondrion, to their mature size. While most mitochondrial precursor proteins are processed to the mature form in one step by mitochondrial processing peptidase (MPP), the sequential cleavage by MIP of an octapeptide after initial processing by MPP is a required step for a subgroup of nuclear-encoded precursor proteins destined for the matrix or the inner membrane. This is Mitochondrial intermediate peptidase (oct1) from Aspergillus niger (strain ATCC MYA-4892 / CBS 513.88 / FGSC A1513).